Consider the following 197-residue polypeptide: EF-hand calcium-binding domain-containing protein 9 (197 aa).

Asp-58 and Asp-69 together coordinate Ca(2+). 3 consecutive EF-hand domains span residues 59–94 (LKKA…LLAH), 100–135 (GQFM…FLFN), and 136–171 (IQKQ…YTDK). Positions 149, 153, 155, and 160 each coordinate Ca(2+). A compositionally biased stretch (basic and acidic residues) spans 177 to 188 (KTEEKEKGERKR). The tract at residues 177–197 (KTEEKEKGERKRSLYSKCHIK) is disordered.

Component of the CatSper complex or CatSpermasome composed of the core pore-forming members CATSPER1, CATSPER2, CATSPER3 and CATSPER4 as well as auxiliary members CATSPERB, CATSPERG, CATSPERD, CATSPERE, CATSPERZ, C2CD6/CATSPERT, TMEM249, TMEM262 and EFCAB9. HSPA1 may be an additional auxiliary complex member. The core complex members CATSPER1, CATSPER2, CATSPER3 and CATSPER4 form a heterotetrameric channel. The auxiliary CATSPERB, CATSPERG, CATSPERD and CATSPERE subunits form a pavilion-like structure over the pore which stabilizes the complex through interactions with CATSPER4, CATSPER3, CATSPER1 and CATSPER2 respectively. TMEM262/CATSPERH interacts with CATSPERB, further stabilizing the complex. C2CD6/CATSPERT interacts at least with CATSPERD and is required for targeting the CatSper complex in the flagellar membrane. Interacts with CATSPERZ; the interaction is direct, Ca(2+)-dependent and connects EFCAB9 with the CatSper complex. Dissociates from CATSPERZ at elevated pH.

The protein resides in the cytoplasm. It is found in the cell projection. The protein localises to the cilium. Its subcellular location is the flagellum. In terms of biological role, auxiliary component of the CatSper complex, a complex involved in sperm cell hyperactivation. pH-dependent Ca(2+) sensor required to activate the CatSper channel. Sperm cell hyperactivation is needed for sperm motility which is essential late in the preparation of sperm for fertilization. Associates with the CatSper complex via direct interaction with CATSPERZ, and senses intracellular Ca(2+). Together with CATSPERZ, associates with the CatSper channel pore and is required for the two-row structure of each single CatSper channel. The protein is EF-hand calcium-binding domain-containing protein 9 of Homo sapiens (Human).